Here is a 432-residue protein sequence, read N- to C-terminus: Adenylosuccinate synthetase (432 aa).

Residues G13 to K19 and G41 to T43 contribute to the GTP site. D14 (proton acceptor) is an active-site residue. D14 and G41 together coordinate Mg(2+). Residues D14–K17, N39–H42, T130, R144, Q225, T240, and R304 contribute to the IMP site. H42 acts as the Proton donor in catalysis. A300 to R306 is a substrate binding site. Residues R306, K332–D334, and S415–G417 each bind GTP.

It belongs to the adenylosuccinate synthetase family. As to quaternary structure, homodimer. Mg(2+) serves as cofactor.

The protein resides in the cytoplasm. The catalysed reaction is IMP + L-aspartate + GTP = N(6)-(1,2-dicarboxyethyl)-AMP + GDP + phosphate + 2 H(+). The protein operates within purine metabolism; AMP biosynthesis via de novo pathway; AMP from IMP: step 1/2. Functionally, plays an important role in the de novo pathway of purine nucleotide biosynthesis. Catalyzes the first committed step in the biosynthesis of AMP from IMP. This Hahella chejuensis (strain KCTC 2396) protein is Adenylosuccinate synthetase.